Here is an 856-residue protein sequence, read N- to C-terminus: Lon protease (856 aa).

In terms of domain architecture, Lon N-terminal spans phenylalanine 68–isoleucine 261. An ATP-binding site is contributed by glycine 412 to threonine 419. One can recognise a Lon proteolytic domain in the interval glutamate 647–arginine 828. Active-site residues include serine 734 and lysine 777.

This sequence belongs to the peptidase S16 family. In terms of assembly, homohexamer. Organized in a ring with a central cavity.

The protein localises to the cytoplasm. It carries out the reaction Hydrolysis of proteins in presence of ATP.. In terms of biological role, ATP-dependent serine protease that mediates the selective degradation of mutant and abnormal proteins as well as certain short-lived regulatory proteins. Required for cellular homeostasis and for survival from DNA damage and developmental changes induced by stress. Degrades polypeptides processively to yield small peptide fragments that are 5 to 10 amino acids long. Binds to DNA in a double-stranded, site-specific manner. The protein is Lon protease of Azorhizobium caulinodans (strain ATCC 43989 / DSM 5975 / JCM 20966 / LMG 6465 / NBRC 14845 / NCIMB 13405 / ORS 571).